We begin with the raw amino-acid sequence, 304 residues long: D-tagatose-1-phosphate kinase (304 aa).

The active-site Proton acceptor is the Asp-250.

This sequence belongs to the carbohydrate kinase PfkB family. It depends on Mg(2+) as a cofactor.

It carries out the reaction alpha-D-tagatopyranose 1-phosphate + ATP = D-tagatofuranose 1,6-bisphosphate + ADP + H(+). It functions in the pathway carbohydrate degradation. With respect to regulation, activity is inhibited by tagatose-6-phosphate and fructose-6-phosphate. Its function is as follows. Kinase involved in a D-tagatose catabolic pathway. Catalyzes the phosphorylation of D-tagatose-1-phosphate (Tag-1P) to D-tagatose-1,6-bisphosphate. Can also use D-fructose-1-phosphate, with 40-fold lower catalytic efficiency, but not tagatose-6-phosphate or fructose-6-phosphate. The substrate, which occurs in a pyranose form in solution, may undergo a change to the furanose conformation after binding to the enzyme, in order to permit phosphorylation at C-6. The sequence is that of D-tagatose-1-phosphate kinase from Bacillus licheniformis (strain ATCC 14580 / DSM 13 / JCM 2505 / CCUG 7422 / NBRC 12200 / NCIMB 9375 / NCTC 10341 / NRRL NRS-1264 / Gibson 46).